The following is a 1024-amino-acid chain: RNA cytidine acetyltransferase (1024 aa).

Residue G287–L296 participates in ATP binding. Position 426 is an N6-acetyllysine (K426). R470 lines the ATP pocket. Positions C558 to A753 constitute an N-acetyltransferase domain. Acetyl-CoA contacts are provided by residues I629 to V631 and Q636 to S642. Residues P702–K1024 are required for localization to the nucleolus and midbody. Residue T716 is modified to Phosphothreonine. R725 is a binding site for acetyl-CoA. Phosphoserine is present on residues S934, S984, and S987. The segment at S990–K1024 is disordered. Basic residues predominate over residues S1005 to K1024.

The protein belongs to the RNA cytidine acetyltransferase family. NAT10 subfamily. Part of the small subunit (SSU) processome, composed of more than 70 proteins and the RNA chaperone small nucleolar RNA (snoRNA) U3. Interacts with THUMPD1. Interacts with SUN1 (via N-terminus). Interacts with TERT.

It is found in the nucleus. It localises to the nucleolus. It carries out the reaction a cytidine in 18S rRNA + acetyl-CoA + ATP + H2O = an N(4)-acetylcytidine in 18S rRNA + ADP + phosphate + CoA + H(+). It catalyses the reaction a cytidine in tRNA + acetyl-CoA + ATP + H2O = an N(4)-acetylcytidine in tRNA + ADP + phosphate + CoA + H(+). The enzyme catalyses a cytidine in mRNA + acetyl-CoA + ATP + H2O = an N(4)-acetylcytidine in mRNA + ADP + phosphate + CoA + H(+). Functionally, RNA cytidine acetyltransferase that catalyzes the formation of N(4)-acetylcytidine (ac4C) modification on mRNAs, 18S rRNA and tRNAs. Catalyzes ac4C modification of a broad range of mRNAs, enhancing mRNA stability and translation. mRNA ac4C modification is frequently present within wobble cytidine sites and promotes translation efficiency. Mediates the formation of ac4C at position 1842 in 18S rRNA. May also catalyze the formation of ac4C at position 1337 in 18S rRNA. Required for early nucleolar cleavages of precursor rRNA at sites A0, A1 and A2 during 18S rRNA synthesis. Catalyzes the formation of ac4C in serine and leucine tRNAs. Requires the tRNA-binding adapter protein THUMPD1 for full tRNA acetyltransferase activity but not for 18S rRNA acetylation. In addition to RNA acetyltransferase activity, also able to acetylate lysine residues of proteins, such as histones, microtubules, p53/TP53 and MDM2, in vitro. The relevance of the protein lysine acetyltransferase activity is however unsure in vivo. Activates telomerase activity by stimulating the transcription of TERT, and may also regulate telomerase function by affecting the balance of telomerase subunit assembly, disassembly, and localization. Involved in the regulation of centrosome duplication by acetylating CENATAC during mitosis, promoting SASS6 proteasome degradation. Part of the small subunit (SSU) processome, first precursor of the small eukaryotic ribosomal subunit. During the assembly of the SSU processome in the nucleolus, many ribosome biogenesis factors, an RNA chaperone and ribosomal proteins associate with the nascent pre-rRNA and work in concert to generate RNA folding, modifications, rearrangements and cleavage as well as targeted degradation of pre-ribosomal RNA by the RNA exosome. The chain is RNA cytidine acetyltransferase from Mus musculus (Mouse).